The sequence spans 535 residues: Pyrichalasin C-18 hydroxylase (535 aa).

A helical transmembrane segment spans residues 42-62; the sequence is LPSGTLIVLAALSLALLVAVL. 2 N-linked (GlcNAc...) asparagine glycosylation sites follow: Asn139 and Asn222. Position 479 (Cys479) interacts with heme.

This sequence belongs to the cytochrome P450 family. The cofactor is heme.

It is found in the membrane. Its pathway is mycotoxin biosynthesis. Functionally, cytochrome P450 monooxygenase; part of the gene cluster that mediates the biosynthesis of the mycotoxin pyrichalasin H, a tyrosine-derived cytochalasan that inhibits the growth of rice seedlings, but also inhibits lymphocyte capping and actin polymerization and alters cell morphology. Pyrichalasin H is indicated as the responsible agent for the genus-specific pathogenicity of M.grisea toward crabgrass. The first step in the pathway is catalyzed by the O-methyltransferase pyiA which methylates free tyrosine to generate the precursor O-methyltyrosine. The hybrid PKS-NRPS pyiS, assisted by the enoyl reductase pyiC, are responsible for fusion of the O-methyltyrosine precursor and the polyketide backbone. The polyketide synthase module (PKS) of pyiS is responsible for the synthesis of the polyketide backbone and the downstream nonribosomal peptide synthetase (NRPS) amidates the carboxyl end of the polyketide with the O-methyltyrosine precursor. As the NRPS A-domain demonstrates substrate tolerance, pyiS can also use phenylalanine, tyrosine and even para-chlorophenylalanine as amino acid precursor, which leads to the production of novel cytochalasans, including halogenated cytochalasans. Because pyiS lacks a designated enoylreductase (ER) domain, the required activity is provided the enoyl reductase pyiC. Reduction by the hydrolyase pyiE leads to 1,5-dihydropyrrolone, which is substrate for dehydration and intra-molecular Diels-Alder cyclization by the Diels-Alderase pyiF to yield the required isoindolone-fused macrocycle. The tailoring cytochrome P450 monooxygenases piyD and piyG catalyze the hydroxylation at C-18 and C-7, respectivily, whereas the short-chain dehydrogenase/reductase pyiH reduces the carbonyl at C-21 in preparation for the transfer of an acetyl group by the acetyltransferase pyiB. These 3 reactions whose order is not clear yet, lead to the production of O-methylpyrichalasin J, a deacetylated pyrichalasin H. Finally, pyiB to converts O-methylpyrichalasin J into the final product pyrichalasin H via acetylation of C-21. In Pyricularia grisea (Crabgrass-specific blast fungus), this protein is Pyrichalasin C-18 hydroxylase.